The chain runs to 1444 residues: RNA-directed RNA polymerase P1 (1444 aa).

Residues 156-182 are disordered; that stretch reads SEEIQMDESQSDKRRRKKRMEKSRPVW. One can recognise a RdRp catalytic domain in the interval 690–897; that stretch reads LGVGFATLYQ…KTVISHISGE (208 aa).

Belongs to the reoviridae RNA-directed RNA polymerase family.

It localises to the virion. Its subcellular location is the host cytoplasm. The catalysed reaction is RNA(n) + a ribonucleoside 5'-triphosphate = RNA(n+1) + diphosphate. Functionally, RNA-directed RNA polymerase that is involved in both transcription and genome replication. Together with the capping enzyme P5 and protein P7, forms an enzyme complex positioned near the channels situated at each of the five-fold vertices of the core. The chain is RNA-directed RNA polymerase P1 (S1) from Rice dwarf virus (isolate Fujian) (RDV).